The following is a 275-amino-acid chain: Mitochondrial prohibitin complex protein 1 (275 aa).

Positions 180–213 form a coiled coil; it reads REFTEAVEMKQVAQQEAEKARYLVEKAEQMKIAA.

It belongs to the prohibitin family. In terms of assembly, high molecular weight complex that consist of phb-1 and phb-2.

Its subcellular location is the mitochondrion inner membrane. PHB proteins are essential during embryonic development and are required for somatic and germline differentiation in the larval gonad. A deficiency in PHB proteins results in altered mitochondrial biogenesis in body wall muscle cells. This is Mitochondrial prohibitin complex protein 1 (phb-1) from Caenorhabditis elegans.